The primary structure comprises 269 residues: MSIIKNNFEKMNITKIKNSKNNKKLTVITAYDALFAKLFEEIADMILVGDSLNMSFAGRPDTLSATLEQMIYHTNAVCNGAKNAFVIIDMPFGTYINKDEALKNCVEVYRQTNANAVKIEGGEDKADIIKHLTSNAVAVMGHIGLMPQYVRSEGGYKVRGKTKEDEEQLIRDAIAVEKAGAFSIVVEGVKSDVAKKITQAVNIPIIGIGAGVDTDGQVLVWSDMLGFFEEFKPKFVRHYLDGAELVKEAVNQYRNDVQDKSFPSKEEEY.

Mg(2+) contacts are provided by D50 and D89. Residues 50–51 (DS), D89, and K118 contribute to the 3-methyl-2-oxobutanoate site. E120 contacts Mg(2+). E187 (proton acceptor) is an active-site residue.

Belongs to the PanB family. Homodecamer; pentamer of dimers. Requires Mg(2+) as cofactor.

It localises to the cytoplasm. The catalysed reaction is 3-methyl-2-oxobutanoate + (6R)-5,10-methylene-5,6,7,8-tetrahydrofolate + H2O = 2-dehydropantoate + (6S)-5,6,7,8-tetrahydrofolate. It participates in cofactor biosynthesis; (R)-pantothenate biosynthesis; (R)-pantoate from 3-methyl-2-oxobutanoate: step 1/2. Functionally, catalyzes the reversible reaction in which hydroxymethyl group from 5,10-methylenetetrahydrofolate is transferred onto alpha-ketoisovalerate to form ketopantoate. This chain is 3-methyl-2-oxobutanoate hydroxymethyltransferase, found in Aliarcobacter butzleri (strain RM4018) (Arcobacter butzleri).